The chain runs to 493 residues: Alpha-amylase-related protein (493 aa).

Positions 1 to 19 (MFKFALTLTLCLAGSLSLA) are cleaved as a signal peptide. At Gln20 the chain carries Pyrrolidone carboxylic acid. Residues Cys47 and Cys103 are joined by a disulfide bond. Residues Asn117, Gln168, and Asp177 each contribute to the Ca(2+) site. Cys156 and Cys170 are joined by a disulfide. Arg205 lines the chloride pocket. Asp207 functions as the Nucleophile in the catalytic mechanism. His211 serves as a coordination point for Ca(2+). The active-site Proton donor is the Glu244. The chloride site is built by Asn307 and Arg342. Cystine bridges form between Cys375-Cys381, Cys417-Cys440, and Cys447-Cys459.

The protein belongs to the glycosyl hydrolase 13 family. As to quaternary structure, monomer. Ca(2+) is required as a cofactor. It depends on chloride as a cofactor.

It localises to the secreted. It catalyses the reaction Endohydrolysis of (1-&gt;4)-alpha-D-glucosidic linkages in polysaccharides containing three or more (1-&gt;4)-alpha-linked D-glucose units.. The protein is Alpha-amylase-related protein (Amyrel) of Drosophila sechellia (Fruit fly).